Here is a 260-residue protein sequence, read N- to C-terminus: 3'-5' ssDNA/RNA exonuclease TatD (260 aa).

A divalent metal cation contacts are provided by Glu-91, His-127, and His-152.

Belongs to the metallo-dependent hydrolases superfamily. TatD-type hydrolase family. TatD subfamily. In terms of assembly, monomer. Mg(2+) serves as cofactor.

It localises to the cytoplasm. Functionally, 3'-5' exonuclease that prefers single-stranded DNA and RNA. May play a role in the H(2)O(2)-induced DNA damage repair. The protein is 3'-5' ssDNA/RNA exonuclease TatD of Salmonella typhimurium (strain LT2 / SGSC1412 / ATCC 700720).